Reading from the N-terminus, the 710-residue chain is Bifunctional lysine-specific demethylase and histidyl-hydroxylase NO66 (710 aa).

Residues 103–137 (TDEMNKTKKKQKKIMKKEIRKRTKRKRKSVNKREL) form a disordered region. Residues 109–132 (TKKKQKKIMKKEIRKRTKRKRKSV) are compositionally biased toward basic residues. Residues 359–506 (CSIQLTNPQS…DLLERVIPPA (148 aa)) form the JmjC domain. Fe cation contacts are provided by H405, D407, and H472.

The protein belongs to the ROX family. NO66 subfamily. Requires Fe(2+) as cofactor.

Its subcellular location is the nucleus. The catalysed reaction is N(6),N(6)-dimethyl-L-lysyl(36)-[histone H3] + 2 2-oxoglutarate + 2 O2 = L-lysyl(36)-[histone H3] + 2 formaldehyde + 2 succinate + 2 CO2. Functionally, oxygenase that can act as both a histone lysine demethylase and a ribosomal histidine hydroxylase. Specifically demethylates 'Lys-4' (H3K4me) and 'Lys-36' (H3K36me) of histone H3, thereby playing a central role in histone code. The sequence is that of Bifunctional lysine-specific demethylase and histidyl-hydroxylase NO66 from Brugia malayi (Filarial nematode worm).